The chain runs to 336 residues: MKDRYILAFETSCDETSVAVLKNDDELLSNVIASQIESHKRFGGVVPEVASRHHVEVITACIEEALAEAGITEEDVTAVAVTYGPGLVGALLVGLSAAKTFAWAHGLPLIPVNHMAGHLMAAQSVEPLEFPLLALLVSGGHTELVYVSEAGDYKIVGETRDDAVGEAYDKVGRVMGLTYPAGREIDELAHQGQDIYDFPRAMIKEDNLEFSFSGLKSAFINLHHNAEQKGESLSTEDLCASFQAAVMDILMAKTKKALEEYPVKTLVVAGGVAANKGLRERLAAEITDVKVIIPPLRLCGDNAGMIAYASVSEWNKENFAGWDLNAKPSLAFDTME.

The Fe cation site is built by His114 and His118. Substrate-binding positions include 136 to 140 (LVSGG), Asp169, Gly182, Asp186, and Asn275. Position 301 (Asp301) interacts with Fe cation.

Belongs to the KAE1 / TsaD family. The cofactor is Fe(2+).

The protein resides in the cytoplasm. It carries out the reaction L-threonylcarbamoyladenylate + adenosine(37) in tRNA = N(6)-L-threonylcarbamoyladenosine(37) in tRNA + AMP + H(+). Functionally, required for the formation of a threonylcarbamoyl group on adenosine at position 37 (t(6)A37) in tRNAs that read codons beginning with adenine. Is involved in the transfer of the threonylcarbamoyl moiety of threonylcarbamoyl-AMP (TC-AMP) to the N6 group of A37, together with TsaE and TsaB. TsaD likely plays a direct catalytic role in this reaction. The chain is tRNA N6-adenosine threonylcarbamoyltransferase from Streptococcus pneumoniae (strain Hungary19A-6).